The primary structure comprises 280 residues: Bifunctional protein FolD (280 aa).

Residues 166–168 (GRS) and Ser191 each bind NADP(+).

The protein belongs to the tetrahydrofolate dehydrogenase/cyclohydrolase family. As to quaternary structure, homodimer.

It catalyses the reaction (6R)-5,10-methylene-5,6,7,8-tetrahydrofolate + NADP(+) = (6R)-5,10-methenyltetrahydrofolate + NADPH. The enzyme catalyses (6R)-5,10-methenyltetrahydrofolate + H2O = (6R)-10-formyltetrahydrofolate + H(+). Its pathway is one-carbon metabolism; tetrahydrofolate interconversion. Catalyzes the oxidation of 5,10-methylenetetrahydrofolate to 5,10-methenyltetrahydrofolate and then the hydrolysis of 5,10-methenyltetrahydrofolate to 10-formyltetrahydrofolate. This is Bifunctional protein FolD from Marinomonas sp. (strain MWYL1).